The sequence spans 271 residues: 3-methyl-2-oxobutanoate hydroxymethyltransferase 1 (271 aa).

Positions 53 and 92 each coordinate Mg(2+). Residues 53–54 (DS), aspartate 92, and lysine 120 contribute to the 3-methyl-2-oxobutanoate site. Residue glutamate 122 coordinates Mg(2+). Glutamate 189 (proton acceptor) is an active-site residue.

The protein belongs to the PanB family. As to quaternary structure, homodecamer; pentamer of dimers. Requires Mg(2+) as cofactor.

The protein localises to the cytoplasm. The catalysed reaction is 3-methyl-2-oxobutanoate + (6R)-5,10-methylene-5,6,7,8-tetrahydrofolate + H2O = 2-dehydropantoate + (6S)-5,6,7,8-tetrahydrofolate. It participates in cofactor biosynthesis; (R)-pantothenate biosynthesis; (R)-pantoate from 3-methyl-2-oxobutanoate: step 1/2. Catalyzes the reversible reaction in which hydroxymethyl group from 5,10-methylenetetrahydrofolate is transferred onto alpha-ketoisovalerate to form ketopantoate. This chain is 3-methyl-2-oxobutanoate hydroxymethyltransferase 1, found in Burkholderia ambifaria (strain ATCC BAA-244 / DSM 16087 / CCUG 44356 / LMG 19182 / AMMD) (Burkholderia cepacia (strain AMMD)).